The following is a 294-amino-acid chain: Probable metallo-hydrolase BURPS1710b_2304 (294 aa).

Residues His68, His70, Asp72, His73, His143, Asp170, and His212 each contribute to the a divalent metal cation site.

This sequence belongs to the metallo-beta-lactamase superfamily. A divalent metal cation serves as cofactor.

In terms of biological role, probable hydrolase. Does not have beta-lactamase activity. The sequence is that of Probable metallo-hydrolase BURPS1710b_2304 from Burkholderia pseudomallei (strain 1710b).